Here is a 500-residue protein sequence, read N- to C-terminus: Cobyric acid synthase (500 aa).

The 199-residue stretch at 251–449 (KLNIVIPIMP…LHGVFDHPDA (199 aa)) folds into the GATase cobBQ-type domain. The active-site Nucleophile is the Cys-332. The active site involves His-441.

This sequence belongs to the CobB/CobQ family. CobQ subfamily.

It participates in cofactor biosynthesis; adenosylcobalamin biosynthesis. Its function is as follows. Catalyzes amidations at positions B, D, E, and G on adenosylcobyrinic A,C-diamide. NH(2) groups are provided by glutamine, and one molecule of ATP is hydrogenolyzed for each amidation. This Marinomonas sp. (strain MWYL1) protein is Cobyric acid synthase.